The following is a 296-amino-acid chain: MNLEKLTTETRNQKTMALDMLSVKEMLELMNQEDQRVPVAVSKELPQIECAVDKIVANFKAGGRLIYMGAGTSGRLGVLDAAECVPTFGTSPEMVQGLIAGGMSAMTVAVEGAEDSIELGQQDLVDLHLTSHDTVVGVAASGRTPYVIGGLDYACEVGATTVSIACNADASISQHAQIPIEVEVGPEILTGSTRLKSGTAQKLVLNMLSTASMVGIGKVYKNLMVDVKPTNEKLVERAKRIIVQATDCSDETAVKVFMTADQNVKLAIVMVLTNMSKAEASVRLDHANGFVRQAVN.

Residues 55–218 (IVANFKAGGR…STASMVGIGK (164 aa)) enclose the SIS domain. Residue Glu-83 is the Proton donor of the active site. Glu-114 is a catalytic residue.

Belongs to the GCKR-like family. MurNAc-6-P etherase subfamily. In terms of assembly, homodimer.

The catalysed reaction is N-acetyl-D-muramate 6-phosphate + H2O = N-acetyl-D-glucosamine 6-phosphate + (R)-lactate. The protein operates within amino-sugar metabolism; N-acetylmuramate degradation. Functionally, specifically catalyzes the cleavage of the D-lactyl ether substituent of MurNAc 6-phosphate, producing GlcNAc 6-phosphate and D-lactate. In Lactiplantibacillus plantarum (strain ATCC BAA-793 / NCIMB 8826 / WCFS1) (Lactobacillus plantarum), this protein is N-acetylmuramic acid 6-phosphate etherase 2.